An 81-amino-acid chain; its full sequence is Large ribosomal subunit protein bL28 (81 aa).

The protein belongs to the bacterial ribosomal protein bL28 family. In terms of assembly, part of the 50S ribosomal subunit.

This is Large ribosomal subunit protein bL28 from Deinococcus radiodurans (strain ATCC 13939 / DSM 20539 / JCM 16871 / CCUG 27074 / LMG 4051 / NBRC 15346 / NCIMB 9279 / VKM B-1422 / R1).